Here is a 456-residue protein sequence, read N- to C-terminus: MLNNAMSVVILAAGKGTRMYSDLPKVLHTLAGKAMVQHVIDAANELGAAHVHLVYGHGGDLLKQALKDDNLNWVLQAEQLGTGHAMQQAAPFFADDEDILMLYGDVPLISVETLQRLRDAKPQGGIGLLTVKLDDPTGYGRITRENGKVTGIVEHKDATDEQRQIQEINTGILIANGADMKRWLAKLTNNNAQGEYYITDIIALAYQEGREIVAVHPQRLSEVEGVNNRLQLSRLERVYQSEQAEKLLLAGVMLRDPARFDLRGTLAHGRDIEIDTNVIIEGNVTLGHRVKIGTGCVIKNSVIGDDCEISPYTIVEDANLAAACTIGPFARLRPGAELLEGAHVGNFVEMKKARLGKGSKAGHLTYLGDAEIGDNVNIGAGTITCNYDGANKFKTIIGDDVFVGSDTQLVAPVTVGKGATIAAGTTVTRNVGENALAISRVPQTQKEGWRRPVKKK.

The interval 1-229 (MLNNAMSVVI…LSEVEGVNNR (229 aa)) is pyrophosphorylase. Residues 11-14 (LAAG), lysine 25, glutamine 76, 81-82 (GT), 103-105 (YGD), glycine 140, glutamate 154, asparagine 169, and asparagine 227 contribute to the UDP-N-acetyl-alpha-D-glucosamine site. Aspartate 105 serves as a coordination point for Mg(2+). Asparagine 227 is a binding site for Mg(2+). Residues 230–250 (LQLSRLERVYQSEQAEKLLLA) form a linker region. The N-acetyltransferase stretch occupies residues 251–456 (GVMLRDPARF…EGWRRPVKKK (206 aa)). Residues arginine 333 and lysine 351 each coordinate UDP-N-acetyl-alpha-D-glucosamine. The active-site Proton acceptor is histidine 363. Residues tyrosine 366 and asparagine 377 each contribute to the UDP-N-acetyl-alpha-D-glucosamine site. Residues alanine 380, 386–387 (NY), serine 405, alanine 423, and arginine 440 each bind acetyl-CoA.

The protein in the N-terminal section; belongs to the N-acetylglucosamine-1-phosphate uridyltransferase family. It in the C-terminal section; belongs to the transferase hexapeptide repeat family. In terms of assembly, homotrimer. It depends on Mg(2+) as a cofactor.

The protein localises to the cytoplasm. It carries out the reaction alpha-D-glucosamine 1-phosphate + acetyl-CoA = N-acetyl-alpha-D-glucosamine 1-phosphate + CoA + H(+). The catalysed reaction is N-acetyl-alpha-D-glucosamine 1-phosphate + UTP + H(+) = UDP-N-acetyl-alpha-D-glucosamine + diphosphate. It participates in nucleotide-sugar biosynthesis; UDP-N-acetyl-alpha-D-glucosamine biosynthesis; N-acetyl-alpha-D-glucosamine 1-phosphate from alpha-D-glucosamine 6-phosphate (route II): step 2/2. It functions in the pathway nucleotide-sugar biosynthesis; UDP-N-acetyl-alpha-D-glucosamine biosynthesis; UDP-N-acetyl-alpha-D-glucosamine from N-acetyl-alpha-D-glucosamine 1-phosphate: step 1/1. Its pathway is bacterial outer membrane biogenesis; LPS lipid A biosynthesis. Functionally, catalyzes the last two sequential reactions in the de novo biosynthetic pathway for UDP-N-acetylglucosamine (UDP-GlcNAc). The C-terminal domain catalyzes the transfer of acetyl group from acetyl coenzyme A to glucosamine-1-phosphate (GlcN-1-P) to produce N-acetylglucosamine-1-phosphate (GlcNAc-1-P), which is converted into UDP-GlcNAc by the transfer of uridine 5-monophosphate (from uridine 5-triphosphate), a reaction catalyzed by the N-terminal domain. In Escherichia coli O8 (strain IAI1), this protein is Bifunctional protein GlmU.